A 168-amino-acid polypeptide reads, in one-letter code: Probable chorismate pyruvate-lyase (168 aa).

Positions 75, 114, and 155 each coordinate substrate.

The protein belongs to the UbiC family.

It localises to the cytoplasm. It carries out the reaction chorismate = 4-hydroxybenzoate + pyruvate. Its pathway is cofactor biosynthesis; ubiquinone biosynthesis. Its function is as follows. Removes the pyruvyl group from chorismate, with concomitant aromatization of the ring, to provide 4-hydroxybenzoate (4HB) for the ubiquinone pathway. This is Probable chorismate pyruvate-lyase from Psychrobacter arcticus (strain DSM 17307 / VKM B-2377 / 273-4).